The chain runs to 320 residues: Mitochondrial glutamate carrier 2 (320 aa).

Solcar repeat units follow at residues 11-97 (LSIT…LRQL), 105-215 (RNLK…LNQL), and 224-313 (ASFT…GIGE). 3 helical membrane-spanning segments follow: residues 17 to 37 (LING…IDLA), 66 to 86 (FLGM…EKAI), and 111 to 131 (MLAG…MEML). Residue Ser-150 is modified to Phosphoserine. A run of 3 helical transmembrane segments spans residues 190 to 210 (GLGA…PLFA), 230 to 250 (FVAG…LDVL), and 293 to 313 (ALVI…GIGE).

Belongs to the mitochondrial carrier (TC 2.A.29) family.

It is found in the mitochondrion inner membrane. It catalyses the reaction L-glutamate(in) + H(+)(in) = L-glutamate(out) + H(+)(out). Responsible for the transport of glutamate from the cytosol into the mitochondrial matrix with the concomitant import of a proton (symport system). The sequence is that of Mitochondrial glutamate carrier 2 (Slc25a18) from Rattus norvegicus (Rat).